The sequence spans 174 residues: Calcineurin subunit B (174 aa).

EF-hand domains follow at residues 21-56, 60-88, 90-125, and 131-166; these read EEIE…SSNP, RLMD…FSGK, SKLD…MVGK, and ELQQ…KSVA. Ca(2+) contacts are provided by D34, D36, S38, T40, E45, D66, D68, N70, T72, E77, D103, D105, D107, Y109, E114, D144, D146, D148, R150, and E155.

This sequence belongs to the calcineurin regulatory subunit family. In terms of assembly, composed of a catalytic subunit (A) and a regulatory subunit (B).

Regulatory subunit of calcineurin, a calcium-dependent, calmodulin stimulated protein phosphatase. Confers calcium sensitivity. The sequence is that of Calcineurin subunit B (CNB1) from Debaryomyces hansenii (strain ATCC 36239 / CBS 767 / BCRC 21394 / JCM 1990 / NBRC 0083 / IGC 2968) (Yeast).